The primary structure comprises 52 residues: Unknown protein from spot 415 of 2D-PAGE of etiolated coleoptile (52 aa).

This chain is Unknown protein from spot 415 of 2D-PAGE of etiolated coleoptile, found in Zea mays (Maize).